Consider the following 126-residue polypeptide: Glycine cleavage system H protein (126 aa).

The Lipoyl-binding domain maps to 21–103 (TVTIGISEHA…YDGGWIVKVK (83 aa)). At Lys-62 the chain carries N6-lipoyllysine.

This sequence belongs to the GcvH family. The glycine cleavage system is composed of four proteins: P, T, L and H. (R)-lipoate serves as cofactor.

In terms of biological role, the glycine cleavage system catalyzes the degradation of glycine. The H protein shuttles the methylamine group of glycine from the P protein to the T protein. This is Glycine cleavage system H protein from Vibrio cholerae serotype O1 (strain ATCC 39541 / Classical Ogawa 395 / O395).